The chain runs to 574 residues: Mitochondrial distribution and morphology protein 34 (574 aa).

The region spanning 1–195 is the SMP-LTD domain; that stretch reads MAFNFNWSPL…LPAIIHRLSL (195 aa). 3 disordered regions span residues 210–233, 301–403, and 479–515; these read RESP…KDPV, EGAA…TPPT, and SADG…ESNA. 3 stretches are compositionally biased toward low complexity: residues 212 to 224, 302 to 314, and 323 to 334; these read SPAA…GEDP, GAAS…GSPV, and SSPLSSLQDASS. A compositionally biased stretch (polar residues) spans 335 to 345; the sequence is VLSLQNRSTTP. Residues 346–359 show a composition bias toward low complexity; sequence GSSFSGYGLSLGAG. Residues 360–373 are compositionally biased toward basic residues; the sequence is RHSKTRPTRKRKKR. The segment covering 374-385 has biased composition (basic and acidic residues); sequence VVDLRKHNKPAD. Residues 393 to 403 show a composition bias toward low complexity; that stretch reads STFTESTTPPT. The span at 484 to 493 shows a compositional bias: polar residues; the sequence is KTSSQQQPIS.

It belongs to the MDM34 family. In terms of assembly, component of the ER-mitochondria encounter structure (ERMES) or MDM complex, composed of MMM1, MDM10, MDM12 and MDM34.

The protein resides in the mitochondrion outer membrane. Component of the ERMES/MDM complex, which serves as a molecular tether to connect the endoplasmic reticulum (ER) and mitochondria. Components of this complex are involved in the control of mitochondrial shape and protein biogenesis, and function in nonvesicular lipid trafficking between the ER and mitochondria. MDM34 is required for the interaction of the ER-resident membrane protein MMM1 and the outer mitochondrial membrane-resident beta-barrel protein MDM10. This is Mitochondrial distribution and morphology protein 34 from Coccidioides immitis (strain RS) (Valley fever fungus).